The primary structure comprises 286 residues: uncharacterized protein (286 aa).

The region spanning 1-146 (MSRYKKDNDG…KPVDVERGDF (146 aa)) is the Integrase catalytic domain. Over residues 252-263 (RKVKAKKGKKDK) the composition is skewed to basic residues. The tract at residues 252 to 286 (RKVKAKKGKKDKKLKESKKSDDTSTGASTGSSIAM) is disordered. Residues 264–273 (KLKESKKSDD) show a composition bias toward basic and acidic residues. Positions 274 to 286 (TSTGASTGSSIAM) are enriched in low complexity.

This is an uncharacterized protein from Caenorhabditis elegans.